The chain runs to 100 residues: Nucleoid-associated protein Cagg_3200 (100 aa).

The protein belongs to the YbaB/EbfC family. In terms of assembly, homodimer.

The protein resides in the cytoplasm. The protein localises to the nucleoid. Its function is as follows. Binds to DNA and alters its conformation. May be involved in regulation of gene expression, nucleoid organization and DNA protection. The protein is Nucleoid-associated protein Cagg_3200 of Chloroflexus aggregans (strain MD-66 / DSM 9485).